The sequence spans 246 residues: Ribonuclease PH (246 aa).

Residues arginine 91 and 129–131 (GTR) contribute to the phosphate site.

It belongs to the RNase PH family. In terms of assembly, homohexameric ring arranged as a trimer of dimers.

It carries out the reaction tRNA(n+1) + phosphate = tRNA(n) + a ribonucleoside 5'-diphosphate. Phosphorolytic 3'-5' exoribonuclease that plays an important role in tRNA 3'-end maturation. Removes nucleotide residues following the 3'-CCA terminus of tRNAs; can also add nucleotides to the ends of RNA molecules by using nucleoside diphosphates as substrates, but this may not be physiologically important. Probably plays a role in initiation of 16S rRNA degradation (leading to ribosome degradation) during starvation. The sequence is that of Ribonuclease PH from Burkholderia vietnamiensis (strain G4 / LMG 22486) (Burkholderia cepacia (strain R1808)).